Here is a 961-residue protein sequence, read N- to C-terminus: Ubiquitin carboxyl-terminal hydrolase 4 (961 aa).

Residues 11–122 (PDVETQKTEL…GQQPIVRKVV (112 aa)) enclose the DUSP domain. A necessary for interaction with SART3 region spans residues 27–216 (TLQRGAQWYL…LYQGQVLVIE (190 aa)). The Nuclear export signal motif lies at 133 to 141 (VEVYLLELK). In terms of domain architecture, Ubiquitin-like 1 spans 142 to 226 (LCENSDPTNV…PQNEDGTWPR (85 aa)). The disordered stretch occupies residues 219–257 (NEDGTWPRQTLQSKSSTAPSRNFTTSSKPSASPYSSMSA). The span at 225–243 (PRQTLQSKSSTAPSRNFTT) shows a compositional bias: polar residues. A required for USP4 activation by providing conformational flexibility between the DUSP and catalytic domains region spans residues 229–295 (LQSKSSTAPS…SYNCQEPPSP (67 aa)). Over residues 244-257 (SSKPSASPYSSMSA) the composition is skewed to low complexity. Residues 302–921 (CGLGNLGNTC…AAYVLFYQRR (620 aa)) form the USP domain. Cysteine 311 is an active-site residue. The tract at residues 384–386 (PQF) is regulates ubiquitin dissociation. The necessary for interaction with RBL2 stretch occupies residues 405 to 407 (LHE). Residue serine 445 is modified to Phosphoserine. Residues 459–463 (LVCPE) are necessary for interaction with RB1 and RBL2. The Zn(2+) site is built by cysteine 461 and cysteine 464. In terms of domain architecture, Ubiquitin-like 2 spans 483-571 (LKKDRIMEVF…IFVYEICTTP (89 aa)). Residues 485 to 773 (KDRIMEVFLV…SQPQKKKKAA (289 aa)) form an interacts with DUSP and ubiquitin-like 1 domains and is required for USP4 activation region. Positions 641–700 (SSPLEPGACNGSRGSYEGDEEEMDHQEEGKEQLSEVEESGEDSQGGDPTETTQKAKGPPR) are disordered. Phosphoserine occurs at positions 655, 674, and 679. The Nuclear localization signal motif lies at 765–770 (QPQKKK). The Zn(2+) site is built by cysteine 797 and cysteine 800. Residue histidine 879 is part of the active site. The interval 924–961 (ECPSTSSPVSFPGSDGGAKLSSSQQDLGEEEAYTMDTN) is disordered. Residues 950 to 961 (LGEEEAYTMDTN) are compositionally biased toward acidic residues.

It belongs to the peptidase C19 family. USP4 subfamily. In terms of assembly, interacts with RB1 (both dephosphorylated and hypophosphorylated forms). Interacts with RBL1 and RBL2. Interacts with ADORA2A (via cytoplasmic C-terminus); the interaction is direct. Interacts with SART3; recruits USP4 to its substrate PRPF3. Post-translationally, phosphorylated at Ser-445 by PKB/AKT1 in response to EGF stimulus, promoting its ability deubiquitinate RHEB. Monoubiquitinated by TRIM21. Ubiquitination does not lead to its proteasomal degradation. Autodeubiquitinated. As to expression, expressed in hippocampus and striatum (at protein level).

It is found in the cytoplasm. The protein resides in the nucleus. It carries out the reaction Thiol-dependent hydrolysis of ester, thioester, amide, peptide and isopeptide bonds formed by the C-terminal Gly of ubiquitin (a 76-residue protein attached to proteins as an intracellular targeting signal).. Its activity is regulated as follows. The completion of the deubiquitinase reaction is mediated by the DUSP and ubiquitin-like 1 domains which promotes the release of ubiquitin from the catalytic site enabling subsequent reactions to occur. Its function is as follows. Deubiquitinating enzyme that removes conjugated ubiquitin from target proteins. Deubiquitinates PDPK1. Deubiquitinates TRIM21. Deubiquitinates receptor ADORA2A which increases the amount of functional receptor at the cell surface. Deubiquitinates HAS2. Deubiquitinates RHEB in response to EGF signaling, promoting mTORC1 signaling. May regulate mRNA splicing through deubiquitination of the U4 spliceosomal protein PRPF3. This may prevent its recognition by the U5 component PRPF8 thereby destabilizing interactions within the U4/U6.U5 snRNP. May also play a role in the regulation of quality control in the ER. In Rattus norvegicus (Rat), this protein is Ubiquitin carboxyl-terminal hydrolase 4 (Usp4).